The sequence spans 410 residues: Beta-arrestin-1 (410 aa).

The segment at 1–163 (MGDKGTRVFK…LEEKIHKRNS (163 aa)) is interaction with SRC. The interaction with CHRM2 stretch occupies residues 45-86 (PEYLKERRVYVTLTCAFRYGREDLDVLGLTFRKDLFVANVQS). Phosphotyrosine is present on Tyr47. Positions 250, 255, 324, and 326 each coordinate 1D-myo-inositol hexakisphosphate. The interval 318-410 (IVSYKVKVKL…GTGSPQLNNR (93 aa)) is interaction with TRAF6. The short motif at 385 to 395 (RQRLKGMKDDK) is the [DE]-X(1,2)-F-X-X-[FL]-X-X-X-R motif element. The disordered stretch occupies residues 389 to 410 (KGMKDDKEEEENGTGSPQLNNR). The segment covering 401–410 (GTGSPQLNNR) has biased composition (polar residues). Residue Ser404 is modified to Phosphoserine; by GRK5.

The protein belongs to the arrestin family. Monomer. Homodimer. Homooligomer; the self-association is mediated by InsP6-binding. Heterooligomer with ARRB2; the association is mediated by InsP6-binding. Interacts with ADRB2 (phosphorylated). Interacts with CHRM2 (phosphorylated). Interacts with LHCGR. Interacts with CYTH2 and CASR. Interacts with AP2B1 (dephosphorylated); phosphorylation of AP2B1 disrupts the interaction. Interacts (dephosphorylated at Ser-404) with CLTC. Interacts with CCR2 and GRK2. Interacts with CRR5. Interacts with PTAFR (phosphorylated on serine residues). Interacts with CLTC and MAP2K3. Interacts with CREB1. Interacts with TRAF6. Interacts with IGF1R and MDM2. Interacts with C5AR1. Interacts with PDE4D. Interacts with SRC (via the SH3 domain and the protein kinase domain); the interaction is independent of the phosphorylation state of SRC C-terminus. Interacts with TACR1. Interacts with RAF1. Interacts with CHUK, IKBKB and MAP3K14. Interacts with DVL1; the interaction is enhanced by phosphorylation of DVL1. Interacts with DVL2; the interaction is enhanced by phosphorylation of DVL2. Interacts with IGF1R. Associates with MAP kinase p38. Part of a MAPK signaling complex consisting of TACR1, ARRB1, SRC, MAPK1 (activated) and MAPK3 (activated). Part of a MAPK signaling complex consisting of F2RL1, ARRB1, RAF1, MAPK1 (activated) and MAPK3 (activated). Interacts with GPR143. Interacts with MAP2K4/MKK4. Interacts with HCK and CXCR1 (phosphorylated). Interacts with ACKR3 and ACKR4. Interacts with ARRDC1; the interaction is direct. Interacts with GPR61, GPR62 and GPR135. In terms of processing, constitutively phosphorylated at in the cytoplasm. At the plasma membrane, is rapidly dephosphorylated, a process that is required for clathrin binding and ADRB2 endocytosis but not for ADRB2 binding and desensitization. Once internalized, is rephosphorylated. Post-translationally, the ubiquitination status appears to regulate the formation and trafficking of beta-arrestin-GPCR complexes and signaling. Ubiquitination appears to occur GPCR-specific. Ubiquitinated by MDM2; the ubiquitination is required for rapid internalization of ADRB2. Deubiquitinated by USP33; the deubiquitination leads to a dissociation of the beta-arrestin-GPCR complex. Stimulation of a class A GPCR, such as ADRB2, induces transient ubiquitination and subsequently promotes association with USP33.

Its subcellular location is the cytoplasm. It localises to the nucleus. It is found in the cell membrane. The protein localises to the membrane. The protein resides in the clathrin-coated pit. Its subcellular location is the cell projection. It localises to the pseudopodium. It is found in the cytoplasmic vesicle. Functions in regulating agonist-mediated G-protein coupled receptor (GPCR) signaling by mediating both receptor desensitization and resensitization processes. During homologous desensitization, beta-arrestins bind to the GPRK-phosphorylated receptor and sterically preclude its coupling to the cognate G-protein; the binding appears to require additional receptor determinants exposed only in the active receptor conformation. The beta-arrestins target many receptors for internalization by acting as endocytic adapters (CLASPs, clathrin-associated sorting proteins) and recruiting the GPRCs to the adapter protein 2 complex 2 (AP-2) in clathrin-coated pits (CCPs). However, the extent of beta-arrestin involvement appears to vary significantly depending on the receptor, agonist and cell type. Internalized arrestin-receptor complexes traffic to intracellular endosomes, where they remain uncoupled from G-proteins. Two different modes of arrestin-mediated internalization occur. Class A receptors, like ADRB2, OPRM1, ENDRA, D1AR and ADRA1B dissociate from beta-arrestin at or near the plasma membrane and undergo rapid recycling. Class B receptors, like AVPR2, AGTR1, NTSR1, TRHR and TACR1 internalize as a complex with arrestin and traffic with it to endosomal vesicles, presumably as desensitized receptors, for extended periods of time. Receptor resensitization then requires that receptor-bound arrestin is removed so that the receptor can be dephosphorylated and returned to the plasma membrane. Involved in internalization of P2RY4 and UTP-stimulated internalization of P2RY2. Involved in phosphorylation-dependent internalization of OPRD1 ands subsequent recycling. Involved in the degradation of cAMP by recruiting cAMP phosphodiesterases to ligand-activated receptors. Beta-arrestins function as multivalent adapter proteins that can switch the GPCR from a G-protein signaling mode that transmits short-lived signals from the plasma membrane via small molecule second messengers and ion channels to a beta-arrestin signaling mode that transmits a distinct set of signals that are initiated as the receptor internalizes and transits the intracellular compartment. Acts as a signaling scaffold for MAPK pathways such as MAPK1/3 (ERK1/2). ERK1/2 activated by the beta-arrestin scaffold is largely excluded from the nucleus and confined to cytoplasmic locations such as endocytic vesicles, also called beta-arrestin signalosomes. Recruits c-Src/SRC to ADRB2 resulting in ERK activation. GPCRs for which the beta-arrestin-mediated signaling relies on both ARRB1 and ARRB2 (codependent regulation) include ADRB2, F2RL1 and PTH1R. For some GPCRs the beta-arrestin-mediated signaling relies on either ARRB1 or ARRB2 and is inhibited by the other respective beta-arrestin form (reciprocal regulation). Inhibits ERK1/2 signaling in AGTR1- and AVPR2-mediated activation (reciprocal regulation). Is required for SP-stimulated endocytosis of NK1R and recruits c-Src/SRC to internalized NK1R resulting in ERK1/2 activation, which is required for the antiapoptotic effects of SP. Is involved in proteinase-activated F2RL1-mediated ERK activity. Acts as a signaling scaffold for the AKT1 pathway. Is involved in alpha-thrombin-stimulated AKT1 signaling. Is involved in IGF1-stimulated AKT1 signaling leading to increased protection from apoptosis. Involved in activation of the p38 MAPK signaling pathway and in actin bundle formation. Involved in F2RL1-mediated cytoskeletal rearrangement and chemotaxis. Involved in AGTR1-mediated stress fiber formation by acting together with GNAQ to activate RHOA. Appears to function as signaling scaffold involved in regulation of MIP-1-beta-stimulated CCR5-dependent chemotaxis. Involved in attenuation of NF-kappa-B-dependent transcription in response to GPCR or cytokine stimulation by interacting with and stabilizing CHUK. May serve as nuclear messenger for GPCRs. Involved in OPRD1-stimulated transcriptional regulation by translocating to CDKN1B and FOS promoter regions and recruiting EP300 resulting in acetylation of histone H4. Involved in regulation of LEF1 transcriptional activity via interaction with DVL1 and/or DVL2 Also involved in regulation of receptors other than GPCRs. Involved in Toll-like receptor and IL-1 receptor signaling through the interaction with TRAF6 which prevents TRAF6 autoubiquitination and oligomerization required for activation of NF-kappa-B and JUN. Involved in IL8-mediated granule release in neutrophils. Binds phosphoinositides. Binds inositolhexakisphosphate (InsP6). Required for atypical chemokine receptor ACKR2-induced RAC1-LIMK1-PAK1-dependent phosphorylation of cofilin (CFL1) and for the up-regulation of ACKR2 from endosomal compartment to cell membrane, increasing its efficiency in chemokine uptake and degradation. Involved in the internalization of the atypical chemokine receptor ACKR3. Negatively regulates the NOTCH signaling pathway by mediating the ubiquitination and degradation of NOTCH1 by ITCH. Participates in the recruitment of the ubiquitin-protein ligase to the receptor. The sequence is that of Beta-arrestin-1 (ARRB1) from Macaca fascicularis (Crab-eating macaque).